The primary structure comprises 302 residues: Acetylglutamate kinase (302 aa).

Residues 68 to 69 (GG), R90, and N194 contribute to the substrate site.

This sequence belongs to the acetylglutamate kinase family. ArgB subfamily.

The protein resides in the cytoplasm. The catalysed reaction is N-acetyl-L-glutamate + ATP = N-acetyl-L-glutamyl 5-phosphate + ADP. The protein operates within amino-acid biosynthesis; L-arginine biosynthesis; N(2)-acetyl-L-ornithine from L-glutamate: step 2/4. Catalyzes the ATP-dependent phosphorylation of N-acetyl-L-glutamate. The protein is Acetylglutamate kinase of Acinetobacter baumannii (strain AB307-0294).